The primary structure comprises 117 residues: Zinc metalloproteinase/disintegrin (117 aa).

Residues 36-117 (TPVSGNELLE…AGCPRNPFHA (82 aa)) enclose the Disintegrin domain. Intrachain disulfides connect C50-C65, C52-C60, C59-C82, C73-C79, C78-C103, and C91-C110. Residues 95–97 (RGD) carry the Cell attachment site motif.

It belongs to the venom metalloproteinase (M12B) family. P-II subfamily. P-IIa sub-subfamily. Monomer. Zn(2+) is required as a cofactor. As to expression, expressed by the venom gland.

The protein localises to the secreted. Its function is as follows. Impairs hemostasis in the envenomed animal. In terms of biological role, inhibits platelet aggregation and bone resorption. In Gloydius halys (Chinese water mocassin), this protein is Zinc metalloproteinase/disintegrin.